The primary structure comprises 152 residues: 3-hydroxyacyl-[acyl-carrier-protein] dehydratase FabZ (152 aa).

The active site involves H58.

Belongs to the thioester dehydratase family. FabZ subfamily.

It localises to the cytoplasm. It catalyses the reaction a (3R)-hydroxyacyl-[ACP] = a (2E)-enoyl-[ACP] + H2O. Functionally, involved in unsaturated fatty acids biosynthesis. Catalyzes the dehydration of short chain beta-hydroxyacyl-ACPs and long chain saturated and unsaturated beta-hydroxyacyl-ACPs. The chain is 3-hydroxyacyl-[acyl-carrier-protein] dehydratase FabZ from Synechococcus sp. (strain RCC307).